The chain runs to 154 residues: Actin-related protein 2/3 complex subunit 5 (154 aa).

Thr142 carries the post-translational modification Phosphothreonine.

It belongs to the ARPC5 family. As to quaternary structure, component of the Arp2/3 complex composed of ARP2, ARP3, ARC40/p41-ARC, ARC35/p34-ARC, ARC18/p21-ARC, ARC19/p20-ARC and ARC16/p16-ARC.

Its subcellular location is the cytoplasm. The protein resides in the cytoskeleton. The protein localises to the actin patch. Functionally, functions as a component of the Arp2/3 complex which is involved in regulation of actin polymerization and together with an activating nucleation-promoting factor (NPF) mediates the formation of branched actin networks. The polypeptide is Actin-related protein 2/3 complex subunit 5 (ARC15) (Saccharomyces cerevisiae (strain ATCC 204508 / S288c) (Baker's yeast)).